Here is a 174-residue protein sequence, read N- to C-terminus: Crossover junction endodeoxyribonuclease RuvC (174 aa).

Catalysis depends on residues Asp8, Glu69, and Asp141. Mg(2+) is bound by residues Asp8, Glu69, and Asp141.

It belongs to the RuvC family. Homodimer which binds Holliday junction (HJ) DNA. The HJ becomes 2-fold symmetrical on binding to RuvC with unstacked arms; it has a different conformation from HJ DNA in complex with RuvA. In the full resolvosome a probable DNA-RuvA(4)-RuvB(12)-RuvC(2) complex forms which resolves the HJ. Requires Mg(2+) as cofactor.

It localises to the cytoplasm. The enzyme catalyses Endonucleolytic cleavage at a junction such as a reciprocal single-stranded crossover between two homologous DNA duplexes (Holliday junction).. In terms of biological role, the RuvA-RuvB-RuvC complex processes Holliday junction (HJ) DNA during genetic recombination and DNA repair. Endonuclease that resolves HJ intermediates. Cleaves cruciform DNA by making single-stranded nicks across the HJ at symmetrical positions within the homologous arms, yielding a 5'-phosphate and a 3'-hydroxyl group; requires a central core of homology in the junction. The consensus cleavage sequence is 5'-(A/T)TT(C/G)-3'. Cleavage occurs on the 3'-side of the TT dinucleotide at the point of strand exchange. HJ branch migration catalyzed by RuvA-RuvB allows RuvC to scan DNA until it finds its consensus sequence, where it cleaves and resolves the cruciform DNA. The polypeptide is Crossover junction endodeoxyribonuclease RuvC (Xanthomonas oryzae pv. oryzae (strain PXO99A)).